A 335-amino-acid chain; its full sequence is Prepilin leader peptidase/N-methyltransferase (335 aa).

Residues 13–33 (LFAVFLFVLGLCVGSFLNVVI) form a helical membrane-spanning segment. Zn(2+)-binding residues include C49, C52, C74, and C77. Helical transmembrane passes span 105 to 125 (WTYE…LAFI), 131 to 151 (ILPL…AFPL), 206 to 226 (LLGV…LMLL), 258 to 278 (PGLP…VQPI), and 299 to 319 (IPFG…GPWL).

This sequence belongs to the peptidase A24 family. It depends on Zn(2+) as a cofactor.

The protein resides in the cell inner membrane. The enzyme catalyses Typically cleaves a -Gly-|-Phe- bond to release an N-terminal, basic peptide of 5-8 residues from type IV prepilin, and then N-methylates the new N-terminal amino group, the methyl donor being S-adenosyl-L-methionine.. Its function is as follows. Plays an essential role in type IV pili and type II pseudopili formation by proteolytically removing the leader sequence from substrate proteins and subsequently monomethylating the alpha-amino group of the newly exposed N-terminal phenylalanine. This is Prepilin leader peptidase/N-methyltransferase (pilD) from Myxococcus xanthus (strain DK1622).